The sequence spans 348 residues: Secreted frizzled-related protein 4 (348 aa).

The signal sequence occupies residues 1–18 (MLLSILVALCLCVRLALG). In terms of domain architecture, FZ spans 19 to 139 (VRGAPCEAVR…VYDRGVCISP (121 aa)). 5 disulfide bridges follow: Cys24-Cys85, Cys32-Cys78, Cys69-Cys108, Cys97-Cys136, and Cys101-Cys125. N-linked (GlcNAc...) asparagine glycans are attached at residues Asn38 and Asn68. N-linked (GlcNAc...) asparagine glycans are attached at residues Asn116, Asn194, and Asn240. The NTR domain maps to 178-296 (CKCKKVKPTL…WEERLQEQQR (119 aa)). A compositionally biased stretch (basic and acidic residues) spans 289–303 (ERLQEQQRTTQDKKQ). Positions 289 to 348 (ERLQEQQRTTQDKKQIASRTSRSNPPKPKGRSPASKPASPKKNIKARSAPKKSNPKKSTS) are disordered. The span at 330-348 (KNIKARSAPKKSNPKKSTS) shows a compositional bias: basic residues.

This sequence belongs to the secreted frizzled-related protein (sFRP) family. As to expression, expressed in the involuting mammary gland, ovarian corpus luteum and prostate. In ovaries, low levels found in granulosa cells. High levels in corpora lutea of pregnant animals.

Its subcellular location is the secreted. Soluble frizzled-related proteins (sFRPS) function as modulators of Wnt signaling through direct interaction with Wnts. They have a role in regulating cell growth and differentiation in specific cell types. SFRP4 plays a role in bone morphogenesis. May also act as a regulator of adult uterine morphology and function. May also increase apoptosis during ovulation possibly through modulation of FZ1/FZ4/WNT4 signaling. Has phosphaturic effects by specifically inhibiting sodium-dependent phosphate uptake. This Rattus norvegicus (Rat) protein is Secreted frizzled-related protein 4 (Sfrp4).